The primary structure comprises 224 residues: Ras-related protein RABA4b (224 aa).

Position 2 is an N-acetylalanine (alanine 2). 24-31 (GDSAVGKS) is a GTP binding site. Residues 46-54 (SKATIGVEF) carry the Effector region motif. Residues 72–76 (DTAGQ), 130–133 (NKSD), and 160–161 (SA) contribute to the GTP site. Residues cysteine 220 and cysteine 221 are each lipidated (S-geranylgeranyl cysteine).

Belongs to the small GTPase superfamily. Rab family. In terms of assembly, interacts with TCTP1. Expressed in roots, stems, leaves and flowers. Expressed in tips of growing root hair cells.

The protein localises to the early endosome membrane. Its subcellular location is the golgi apparatus. The protein resides in the trans-Golgi network membrane. Its function is as follows. Regulator of membrane trafficking. May be required for secretion of cell wall components in cells. This chain is Ras-related protein RABA4b, found in Arabidopsis thaliana (Mouse-ear cress).